The sequence spans 132 residues: Small ribosomal subunit protein uS19 (132 aa).

This sequence belongs to the universal ribosomal protein uS19 family.

Protein S19 forms a complex with S13 that binds strongly to the 16S ribosomal RNA. The protein is Small ribosomal subunit protein uS19 (rps19) of Pyrococcus abyssi (strain GE5 / Orsay).